The primary structure comprises 214 residues: Cutinase CUT2 (214 aa).

Positions 1-18 (MQFSLSIATAILAATASA) are cleaved as a signal peptide. Cys-40 and Cys-117 form a disulfide bridge. Ser-128 (nucleophile) is an active-site residue. An intrachain disulfide couples Cys-179 to Cys-186. Residue Asp-183 is part of the active site. Catalysis depends on His-196, which acts as the Proton donor/acceptor.

This sequence belongs to the cutinase family. The 2 disulfide bonds play a critical role in holding the catalytic residues in juxta-position; reduction of the disulfide bridges results in the complete inactivation of the enzyme.

The protein resides in the secreted. The catalysed reaction is cutin + H2O = cutin monomers.. Functionally, catalyzes the hydrolysis of complex carboxylic polyesters found in the cell wall of plants. Degrades cutin, a macromolecule that forms the structure of the plant cuticle. Required for efficient penetration of the host plant cuticle by the appressorium during the initial stage of fungal infection. In Pyricularia oryzae (strain 70-15 / ATCC MYA-4617 / FGSC 8958) (Rice blast fungus), this protein is Cutinase CUT2.